Here is a 391-residue protein sequence, read N- to C-terminus: Matrix metalloproteinase-23 (391 aa).

At 1 to 18 (MGCRACLRPEASGAVQGR) the chain is on the cytoplasmic side. Residues 1–79 (MGCRACLRPE…LTMSVTRRRR (79 aa)) constitute a propeptide that is removed on maturation. A helical membrane pass occupies residues 19–39 (WLGAALSGLCLLSALALLEWL). The Lumenal segment spans residues 40–391 (GAPTETAWRA…TYSWRVRVRN (352 aa)). 2 N-linked (GlcNAc...) asparagine glycosylation sites follow: asparagine 93 and asparagine 149. Residue histidine 212 coordinates Zn(2+). Residue glutamate 213 is part of the active site. The Zn(2+) site is built by histidine 216 and histidine 222. Residue asparagine 233 is glycosylated (N-linked (GlcNAc...) asparagine). The region spanning 256–290 (CLDRIFVCASWARKGFCDVRQRLMKRLCPRSCDFC) is the ShKT domain. 3 cysteine pairs are disulfide-bonded: cysteine 256–cysteine 290, cysteine 263–cysteine 283, and cysteine 272–cysteine 287. The region spanning 298 to 383 (VATTTSPTRT…RRHQRVLSTY (86 aa)) is the Ig-like C2-type domain. A glycan (N-linked (GlcNAc...) asparagine) is linked at asparagine 317. A disulfide bridge links cysteine 322 with cysteine 371.

The protein belongs to the peptidase M10A family. Zn(2+) serves as cofactor. In terms of processing, N-glycosylated. Post-translationally, proteolytic cleavage might yield an active form. In terms of tissue distribution, expressed at relatively high level in heart, lung and spleen. Not detected in brain, liver, skeletal muscle, kidney and testis.

Its subcellular location is the endoplasmic reticulum membrane. The protein resides in the membrane. Inhibited by TIMP2. In terms of biological role, protease. May regulate the surface expression of some potassium channels by retaining them in the endoplasmic reticulum. This is Matrix metalloproteinase-23 (Mmp23) from Mus musculus (Mouse).